Here is a 344-residue protein sequence, read N- to C-terminus: 4-hydroxy-3-methylbut-2-en-1-yl diphosphate synthase (flavodoxin) (344 aa).

[4Fe-4S] cluster contacts are provided by Cys253, Cys256, Cys288, and Glu295.

Belongs to the IspG family. The cofactor is [4Fe-4S] cluster.

It carries out the reaction (2E)-4-hydroxy-3-methylbut-2-enyl diphosphate + oxidized [flavodoxin] + H2O + 2 H(+) = 2-C-methyl-D-erythritol 2,4-cyclic diphosphate + reduced [flavodoxin]. The protein operates within isoprenoid biosynthesis; isopentenyl diphosphate biosynthesis via DXP pathway; isopentenyl diphosphate from 1-deoxy-D-xylulose 5-phosphate: step 5/6. In terms of biological role, converts 2C-methyl-D-erythritol 2,4-cyclodiphosphate (ME-2,4cPP) into 1-hydroxy-2-methyl-2-(E)-butenyl 4-diphosphate. The protein is 4-hydroxy-3-methylbut-2-en-1-yl diphosphate synthase (flavodoxin) of Thermotoga petrophila (strain ATCC BAA-488 / DSM 13995 / JCM 10881 / RKU-1).